Consider the following 44-residue polypeptide: MRDLKTYLSVAPVVSTIWFGALAGLLIEINRLFPDALVFPFFSF.

The helical transmembrane segment at Y7–I27 threads the bilayer.

The protein belongs to the PsaJ family.

The protein localises to the plastid. It is found in the chloroplast thylakoid membrane. Its function is as follows. May help in the organization of the PsaE and PsaF subunits. This Cucumis sativus (Cucumber) protein is Photosystem I reaction center subunit IX.